The primary structure comprises 297 residues: Probable endonuclease 4 (297 aa).

Residues H69, H110, E145, D179, H182, H214, D227, H229, and E259 each contribute to the Zn(2+) site.

It belongs to the AP endonuclease 2 family. It depends on Zn(2+) as a cofactor.

It carries out the reaction Endonucleolytic cleavage to 5'-phosphooligonucleotide end-products.. Endonuclease IV plays a role in DNA repair. It cleaves phosphodiester bonds at apurinic or apyrimidinic (AP) sites, generating a 3'-hydroxyl group and a 5'-terminal sugar phosphate. The protein is Probable endonuclease 4 of Oceanobacillus iheyensis (strain DSM 14371 / CIP 107618 / JCM 11309 / KCTC 3954 / HTE831).